We begin with the raw amino-acid sequence, 307 residues long: MPQSVLKATSEDLKKMKSAYAHHLTDTLPPGALFQAKVPGCTITAYRSGKVLFQGQKAEAEASQFSHLKATDPKSSKTPAVTKYSPPSGIASMSVIGSDEVGTGDYFGPITVCAAYVDASHLALMKELGVKDSKGLKDPQIINIAKDLIKTIPFSLLVLRNEKYNAMQEKGMSQGKMKALLHNQVITSALEKLDGKQPEAILIDQFAEPGIYFKHLAGKKIIRERTYFSTKAEGIHLSVAAASIIARYAFLIEMDKLSEAAGFEIPKGAGPHVDKAAAKLIKLHGEEALRQFTKLHFANTQKAKKWL.

The RNase H type-2 domain occupies 93 to 307; that stretch reads MSVIGSDEVG…ANTQKAKKWL (215 aa). Residues D99, E100, and D204 each contribute to the a divalent metal cation site.

Belongs to the RNase HII family. RnhC subfamily. Requires Mn(2+) as cofactor. It depends on Mg(2+) as a cofactor.

The protein localises to the cytoplasm. The enzyme catalyses Endonucleolytic cleavage to 5'-phosphomonoester.. Functionally, endonuclease that specifically degrades the RNA of RNA-DNA hybrids. In Bacillus pumilus (strain SAFR-032), this protein is Ribonuclease HIII.